A 1142-amino-acid polypeptide reads, in one-letter code: Coiled-coil domain-containing protein 40 (1142 aa).

2 disordered regions span residues 1–197 (MAEP…QVLP) and 251–274 (PSTE…AEDE). 2 stretches are compositionally biased toward basic and acidic residues: residues 11 to 27 (SHPE…EGNN) and 35 to 55 (PEKD…HPEE). A compositionally biased stretch (acidic residues) spans 63–96 (AIEEGEVETEGEAAVEGEEEAVSYGDAESEEEYY). Phosphoserine is present on S252. Over residues 265–274 (EGSDEEAEDE) the composition is skewed to acidic residues. Coiled coils occupy residues 293–319 (AALK…ATKQ), 349–470 (HDRH…QAED), 526–627 (QAKS…LRRK), 684–950 (TSSR…LGQL), and 1005–1054 (VRKA…LTRL).

It belongs to the CCDC40 family.

The protein localises to the cytoplasm. It localises to the cell projection. The protein resides in the cilium. In terms of biological role, required for assembly of dynein regulatory complex (DRC) and inner dynein arm (IDA) complexes, which are responsible for ciliary beat regulation, thereby playing a central role in motility in cilia and flagella. Probably acts together with CCDC39 to form a molecular ruler that determines the 96 nanometer (nm) repeat length and arrangements of components in cilia and flagella. Not required for outer dynein arm complexes assembly. Required for axonemal recruitment of CCDC39. The sequence is that of Coiled-coil domain-containing protein 40 from Homo sapiens (Human).